The sequence spans 629 residues: MFYPDPFDVIIIGGGHAGTEAAMAAARMGQQTLLLTHNIDTLGQMSCNPAIGGIGKGHLVKEVDALGGLMAAAIDRAGIQFRILNASKGPAVRATRAQADRVLYRQAVRTALENQPNLMLFQQAVEDLIVENDRVVGAVTQMGLKFRAKAVVLTVGTFLDGKIHIGLDNYSGGRAGDPPSIPLSRRLRELPLRVSRLKTGTPPRIDARTIDFSVLAQQHGDNPMPVFSFMGNASQHPQQVPCYITHTNEKTHDVIRNNLDRSPMYAGVIEGIGPRYCPSIEDKVMRFSDRNQHQIFLEPEGLTSNEIYPNGISTSLPFDVQMQIVRSMQGMENAKIVRPGYAIEYDFFDPRDLKPTLESKFIQGLFFAGQINGTTGYEEAAAQGLLAGLNAARLSADKEGWAPARSQAYLGVLVDDLCTLGTKEPYRMFTSRAEYRLMLREDNADLRLTEIGRDLGLVDDERWARFNEKLENIERERQRLKSTWVTPSAEFAADVNAHLTTPLSREASGEDLLRRPEMTYAQLTSLSAFAPALEDEQAAEQVEIQVKYEGYIARQQDEIEKQLRNENTLLPATLDYRLVSGLSNEVIAKLNDHKPASIGQASRISGVTPAAISILLVWLKKQGMLRRSA.

FAD contacts are provided by residues 13–18 (GGGHAG), Val125, and Ser180. Residue 273-287 (GPRYCPSIEDKVMRF) participates in NAD(+) binding. Gln370 contributes to the FAD binding site.

It belongs to the MnmG family. Homodimer. Heterotetramer of two MnmE and two MnmG subunits. The cofactor is FAD.

The protein localises to the cytoplasm. Functionally, NAD-binding protein involved in the addition of a carboxymethylaminomethyl (cmnm) group at the wobble position (U34) of certain tRNAs, forming tRNA-cmnm(5)s(2)U34. This Salmonella arizonae (strain ATCC BAA-731 / CDC346-86 / RSK2980) protein is tRNA uridine 5-carboxymethylaminomethyl modification enzyme MnmG.